The chain runs to 800 residues: Putative antiporter subunit mnhA2 (800 aa).

20 helical membrane-spanning segments follow: residues 1-21 (MSLVYLLIAILVIMAMILLTS), 33-53 (IALTAPVIASIYFLLQVPSVI), 78-98 (GLSLMFSLIISLIGIAVFFYA), 118-138 (LFMFSMLGIVLADNTILMYVF), 167-187 (FMITVFGGLALLVGFIMLYIM), 207-227 (ALFIPMIIMFLLGAFTKSAQF), 241-261 (TPVSAYLHSATMVKAGIFLLL), 273-293 (YIYIVTFVGLITMLFGSITAL), 300-320 (GILAYSTISQLGMIMAMVGIG), 331-351 (IASIYVFVLFAALFHLMNHAI), 387-407 (LVMMIAALSMAGVPFLNGFLS), 424-444 (FSLISMIIIVCMGVIASIFTF), 472-492 (PWLFSLPSLILMVLVPVIFFV), 527-547 (GFNIPLLLTIIIILLGSVLAI), 595-615 (IIMTLGIFMVIIGYGYIRIGL), 627-647 (GPLEVILAIVTVIIGLSLIFI), 651-671 (LTMVILNGVIGFVVTLFFIAM), 676-696 (LALTQLVVETITTILFIVSFS), 712-732 (IIKISVSLMMALIVVSLIFIA), and 768-788 (LDTLFEGLVLIITGLGIYTLL).

The protein belongs to the CPA3 antiporters (TC 2.A.63) subunit A family. As to quaternary structure, may form a heterooligomeric complex that consists of seven subunits: mnhA2, mnhB2, mnhC2, mnhD2, mnhE2, mnhF2 and mnhG2.

Its subcellular location is the cell membrane. The polypeptide is Putative antiporter subunit mnhA2 (mnhA2) (Staphylococcus aureus (strain MRSA252)).